A 1028-amino-acid chain; its full sequence is Unconventional myosin-Ic-A (1028 aa).

Met1 is subject to N-acetylmethionine. Positions 12–696 constitute a Myosin motor domain; the sequence is GVQDFVLLEN…TLFATEDALE (685 aa). 105–112 is a binding site for ATP; that stretch reads GESGSGKT. Lys348 carries the N6-methyllysine modification. The tract at residues 573 to 595 is actin-binding; sequence LSKLMEILMSKEPSYVRCIKPND. IQ domains follow at residues 699 to 728 and 722 to 751; these read KQGI…SAIN and MKHS…AVDV. The 175-residue stretch at 850–1024 folds into the TH1 domain; sequence KDNYPQSVPR…NGHLSVVAPR (175 aa).

This sequence belongs to the TRAFAC class myosin-kinesin ATPase superfamily. Myosin family. In terms of assembly, interacts (via its IQ motifs) with calmodulin.

The protein resides in the cytoplasm. The protein localises to the cell membrane. Its subcellular location is the cell projection. It is found in the stereocilium membrane. In terms of biological role, myosins are actin-based motor molecules with ATPase activity. Unconventional myosins serve in intracellular movements. Their highly divergent tails are presumed to bind to membranous compartments, which would be moved relative to actin filaments. Involved in egg activation by coupling dynamic actin to membrane. The sequence is that of Unconventional myosin-Ic-A (myo1c-a) from Xenopus laevis (African clawed frog).